The sequence spans 188 residues: Methylamine dehydrogenase light chain (188 aa).

Residues 1 to 57 constitute a signal peptide (tat-type signal); it reads MLGNFRFDDMVEKLSRRVAGRTSRRGAIGRLGTVLAGAALVPLLPVDRRGRVSRANA. Cystine bridges form between Cys-80–Cys-145, Cys-86–Cys-118, Cys-93–Cys-178, Cys-95–Cys-143, Cys-103–Cys-134, and Cys-135–Cys-166. Trp-114 carries the tryptophylquinone modification. The tryptophan tryptophylquinone (Trp-Trp) cross-link spans 114–165; sequence WVASCYNPTDGQSYLIAYRDCCGYNVSGRCPCLNTEGELPVYRPEFANDIIW.

It belongs to the aromatic amine dehydrogenase light chain family. Heterotetramer of two light and two heavy chains. It depends on tryptophan tryptophylquinone residue as a cofactor. Predicted to be exported by the Tat system. The position of the signal peptide cleavage has been experimentally proven. Post-translationally, tryptophan tryptophylquinone (TTQ) is formed by oxidation of the indole ring of a tryptophan to form tryptophylquinone followed by covalent cross-linking with another tryptophan residue.

The protein resides in the periplasm. It carries out the reaction 2 oxidized [amicyanin] + methylamine + H2O = 2 reduced [amicyanin] + formaldehyde + NH4(+) + 2 H(+). It functions in the pathway one-carbon metabolism; methylamine degradation; formaldehyde from methylamine: step 1/1. In terms of biological role, methylamine dehydrogenase carries out the oxidation of methylamine. Electrons are passed from methylamine dehydrogenase to amicyanin. The chain is Methylamine dehydrogenase light chain (mauA) from Paracoccus versutus (Thiobacillus versutus).